Reading from the N-terminus, the 989-residue chain is Envelope glycoprotein gp160 (989 aa).

Positions 1-106 (MTSKESKPSR…CLMWEMRKGN (106 aa)) are cleaved as a signal peptide. Over 107-838 (QCQAEEVIAL…WSSWFSWLKY (732 aa)) the chain is Extracellular. Residues Asn140, Asn161, Asn206, Asn258, Asn298, Asn364, Asn381, Asn387, Asn403, Asn435, Asn439, Asn470, Asn475, Asn481, Asn491, Asn501, Asn515, Asn527, Asn537, Asn542, Asn543, Asn551, and Asn568 are each glycosylated (N-linked (GlcNAc...) asparagine; by host). The segment at 663 to 683 (GIGLVIVLAIMAIIAAAGAGL) is fusion peptide. Residues 695 to 745 (RTAVQSLANATAAQQEVLEASYAMVQHIAKGIRILEARVARVEALVDRMMV) adopt a coiled-coil conformation. A glycan (N-linked (GlcNAc...) asparagine; by host) is linked at Asn703. The immunosuppression stretch occupies residues 729-745 (LEARVARVEALVDRMMV). N-linked (GlcNAc...) asparagine; by host glycans are attached at residues Asn771, Asn778, Asn794, and Asn828. Residues 786–821 (EEIEQHEGNLSLLLREAALQVHIAQRDARRIPDAWK) adopt a coiled-coil conformation. Residues 839–859 (IPWIIMGIVGLICFRILMCVI) form a helical membrane-spanning segment. Residues 860 to 989 (SMCLQAYKQV…PTLENDYVEL (130 aa)) lie on the Cytoplasmic side of the membrane. Residue Cys862 is the site of S-palmitoyl cysteine; by host attachment.

The mature envelope protein (Env) consists of a trimer of SU-TM heterodimers attached by noncovalent interactions or by a labile interchain disulfide bond. Post-translationally, specific enzymatic cleavages in vivo yield mature proteins. Envelope glycoproteins are synthesized as an inactive precursor that is N-glycosylated and processed likely by host cell furin or by a furin-like protease in the Golgi to yield the mature SU and TM proteins. The cleavage site between SU and TM requires the minimal sequence [KR]-X-[KR]-R. In terms of processing, the transmembrane protein is palmitoylated.

It is found in the virion membrane. Its subcellular location is the host cell membrane. The surface protein (SU) attaches the virus to the host cell by binding to its receptor. This interaction triggers the refolding of the transmembrane protein (TM) and is thought to activate its fusogenic potential by unmasking its fusion peptide. Fusion occurs at the host cell plasma membrane. In terms of biological role, the transmembrane protein (TM) acts as a class I viral fusion protein. Under the current model, the protein has at least 3 conformational states: pre-fusion native state, pre-hairpin intermediate state, and post-fusion hairpin state. During viral and target cell membrane fusion, the coiled coil regions (heptad repeats) assume a trimer-of-hairpins structure, positioning the fusion peptide in close proximity to the C-terminal region of the ectodomain. The formation of this structure appears to drive apposition and subsequent fusion of viral and target cell membranes. Membranes fusion leads to delivery of the nucleocapsid into the cytoplasm. This chain is Envelope glycoprotein gp160 (env), found in Ovis aries (Sheep).